The sequence spans 150 residues: Ribonuclease H (150 aa).

The 146-residue stretch at 1–146 folds into the RNase H type-1 domain; sequence MPELFAYTDG…ADELARAGMA (146 aa). Residues Asp-9, Glu-52, Asp-74, and Asp-138 each coordinate Mg(2+).

It belongs to the RNase H family. Monomer. Requires Mg(2+) as cofactor.

Its subcellular location is the cytoplasm. The enzyme catalyses Endonucleolytic cleavage to 5'-phosphomonoester.. Endonuclease that specifically degrades the RNA of RNA-DNA hybrids. The polypeptide is Ribonuclease H (Roseobacter denitrificans (strain ATCC 33942 / OCh 114) (Erythrobacter sp. (strain OCh 114))).